The following is a 511-amino-acid chain: DnaJ homolog 1, mitochondrial (511 aa).

A mitochondrion-targeting transit peptide spans 1-55 (MAFQQGVLSRCSGVFRHHVGHSRHINNILYRHAIAFASIAPRIPKSSFHTSAIRN). The region spanning 59–127 (FKDPYDTLGL…RQQYDQFGPA (69 aa)) is the J domain. The CR-type zinc-finger motif lies at 217–297 (SKNVQLRFSA…CHGEGVQVNR (81 aa)). 4 CXXCXGXG motif repeats span residues 230–237 (CSTCSGTG), 247–254 (CSTCHGTG), 269–276 (CPTCNGEG), and 285–292 (CTKCHGEG).

The protein localises to the mitochondrion. Functionally, plays a role in mitochondrial biogenesis and protein folding. The sequence is that of DnaJ homolog 1, mitochondrial (MDJ1) from Saccharomyces cerevisiae (strain ATCC 204508 / S288c) (Baker's yeast).